The primary structure comprises 126 residues: C-type natriuretic peptide 1 (126 aa).

An N-terminal signal peptide occupies residues 1-22 (MLCPALLCAALLLLTPVEITDA). The propeptide occupies 23–104 (RALQQPSDAA…KRAEPDRSRR (82 aa)). Cys-110 and Cys-126 are joined by a disulfide.

The protein belongs to the natriuretic peptide family.

It is found in the secreted. In terms of biological role, exhibits natriuretic and vasodepressant activity. Has cGMP-stimulating activity. May help to regulate body fluid homeostasis in a variety of aquatic environments. The sequence is that of C-type natriuretic peptide 1 from Takifugu rubripes (Japanese pufferfish).